A 997-amino-acid chain; its full sequence is MKDGGESKEQQLTVALRIRPINETELAEGATIIAHKVDKQMVVLMDPMEDSDDILRANRSREKSYMFDVAFDYTATQDTVYRFTTKGLIEGVISGYNATVFAYGPTGCGKTYTMLGTDWEPGIYIRTLNDLFKAIEETSDDMEYEVLMSYMEIYNEMIRDLLNPSLGYLDLREDSKGVIQVAGITEVSTINAKEIMQLLMKGNRQRTQEPTAANKTSSRSHAILQVTVRQKSRVKNITQEVRVGRLFMIDLAGSERASQTQNRGLRMKEGAHINRSLLALGNCINALSERGSNKYVNYRDSKLTRLLKDSLGGNSRTVMIAHISPASTSFEESRNTLTYADRAKNIKTRVKRNLLNVSYHIAQYTSIISDLRKEIQRLKKKIDEQGLKQIRSEKSDIRNIQAEVQLHSSTYGRHEMEQLKEQLIRAFREQMDIRRQLMEIENSSMEMQMETSRHFLITAEWEQEKTRRARKWRDEHRKETYGKDDSEKDSDTGDDQSDFIEPPEVITARETIQILEGDQNKLRRQKLELEKRFRDVRHHARRLEEALPKRISSDDQREILSLLCKVHELEIENTEMQSHALLKDNMIRQKDYMVQRFEQHRSLCDEIIQQQRRIIYDHNLTVPHQLNDLYELYFRELEEGVLDKAAVLALKDSQSCLPKIPNLTAEENLQEPDSDQESVRTFGSDNRNPIHRDSYKNLLPQILSETDSDTNKVFKTSPRARHLKNGAVVTPPPIHVNGIISKEYLPRNQINYFPDSTDSKVVLTHREKKEITTSIQSIAVKAARRRSRVLEGDRLQPMKERSNLSVHSMSESEDTVFTDQRFPSSSLHHAASEDNLSSTTGEIVAVHGGGSNHRDSPNLWHRTQKKQAQKLEKREESLEVKRRKKRSRSFEVTGQGLVRPKNHISRNRALESNSDHKIQSNTLQTNRKIMLPIAQVKLPQNQTTTVFKMAEQQEGKHQTNQPGSVKKLISTNQPPRFNYINANASGIYVKDVRVRKY.

A Kinesin motor domain is found at 11–346 (QLTVALRIRP…LTYADRAKNI (336 aa)). 104–111 (GPTGCGKT) is a binding site for ATP. A coiled-coil region spans residues 360–437 (HIAQYTSIIS…REQMDIRRQL (78 aa)). Over residues 468-491 (RARKWRDEHRKETYGKDDSEKDSD) the composition is skewed to basic and acidic residues. Residues 468 to 503 (RARKWRDEHRKETYGKDDSEKDSDTGDDQSDFIEPP) are disordered. Residues 508 to 577 (ARETIQILEG…ELEIENTEMQ (70 aa)) are a coiled coil. Disordered stretches follow at residues 662–690 (NLTA…RNPI), 792–811 (GDRL…SMSE), and 848–890 (GGGS…SRSF). Basic and acidic residues-rich tracts occupy residues 792–802 (GDRLQPMKERS) and 869–880 (QKLEKREESLEV). Residues 861–889 (HRTQKKQAQKLEKREESLEVKRRKKRSRS) adopt a coiled-coil conformation.

Belongs to the TRAFAC class myosin-kinesin ATPase superfamily. Kinesin family.

Its subcellular location is the cytoplasm. The protein resides in the cytoskeleton. It is found in the cell projection. It localises to the cilium. Plus end-directed microtubule-dependent motor protein that regulates the length of motile cilia by mediating depolymerization of microtubules at ciliary tips. The protein is Kinesin-like protein KIF19 (kif19) of Xenopus laevis (African clawed frog).